Reading from the N-terminus, the 321-residue chain is Probable arabinan endo-1,5-alpha-L-arabinosidase A (321 aa).

The signal sequence occupies residues 1 to 19 (MSASAFVAVASCLAALVHG). D34 serves as the catalytic Proton acceptor. E200 serves as the catalytic Proton donor.

It belongs to the glycosyl hydrolase 43 family.

It localises to the secreted. The enzyme catalyses Endohydrolysis of (1-&gt;5)-alpha-arabinofuranosidic linkages in (1-&gt;5)-arabinans.. The protein operates within glycan metabolism; L-arabinan degradation. Endo-1,5-alpha-L-arabinanase involved in degradation of pectin. Its preferred substrate is linear 1,5-alpha-L-arabinan. The chain is Probable arabinan endo-1,5-alpha-L-arabinosidase A (abnA) from Neosartorya fischeri (strain ATCC 1020 / DSM 3700 / CBS 544.65 / FGSC A1164 / JCM 1740 / NRRL 181 / WB 181) (Aspergillus fischerianus).